Here is a 963-residue protein sequence, read N- to C-terminus: Thrombospondin-4 (963 aa).

The N-terminal stretch at 1-26 is a signal peptide; sequence MPAPRAAAAAFLLLHLVLQPWQRTSA. A Laminin G-like domain is found at 29 to 194; the sequence is TPQVFDLLPS…LEELKLVVRG (166 aa). The Cell attachment site motif lies at 138–140; it reads RGD. In terms of domain architecture, EGF-like 1 spans 288–327; sequence PTRHCDSSPCFRGVRCTDTRDGFQCGPCPDGYTGNGITCS. Cystine bridges form between Cys292–Cys303, Cys297–Cys312, Cys315–Cys326, Cys332–Cys343, Cys337–Cys352, Cys355–Cys379, Cys385–Cys396, Cys390–Cys405, Cys408–Cys420, Cys426–Cys440, Cys434–Cys450, Cys452–Cys463, Cys479–Cys484, Cys489–Cys509, Cys525–Cys545, Cys548–Cys568, Cys584–Cys604, Cys607–Cys627, Cys645–Cys665, Cys685–Cys705, and Cys721–Cys942. The 38-residue stretch at 328 to 365 folds into the EGF-like 2; calcium-binding domain; that stretch reads DVDECKYHPCYPGVRCVNLAPGFRCDACPVGFTGPMVQ. Residues 381-418 enclose the EGF-like 3; calcium-binding domain; the sequence is DVDECQNGACVLNSICINTLGSYRCGPCKPGYTGDQTR. Residues 422–464 form the EGF-like 4 domain; sequence TERSCRNPEQNPCSVHAQCIEERQGDVTCVCGVGWAGDGYVCG. 8 TSP type-3 repeats span residues 465-497, 498-533, 534-556, 557-592, 593-615, 616-653, 654-693, and 694-729; these read KDVD…NSGQ, EDAD…NIDQ, RNSD…NNDQ, KDTD…NRDQ, QDRD…NPNQ, SDVD…NSSQ, LDTD…NPAQ, and EDSN…EITL. The short motif at 564 to 566 is the Cell attachment site element; the sequence is RGD. A disordered region spans residues 579-676; that stretch reads NILDNCPRVP…DDDDNDGIPD (98 aa). N-linked (GlcNAc...) asparagine glycans are attached at residues Asn614 and Asn650. Polar residues predominate over residues 642–654; that stretch reads TDNCPTVINSSQL. The span at 662–673 shows a compositional bias: acidic residues; the sequence is GDECDDDDDNDG. The 215-residue stretch at 733–947 folds into the TSP C-terminal domain; the sequence is RAYQTVVLDP…LKYRCNDTIP (215 aa). Asn943 carries N-linked (GlcNAc...) asparagine glycosylation.

The protein belongs to the thrombospondin family. As to quaternary structure, homopentamer; disulfide-linked. Interacts with PTBP3. Interacts (via EGF-like 3; calcium-binding domain) with ATF6 and facilitates its processing, activation and nuclear translocation. Interacts with NOTCH1. As to expression, heart. Up-regulated in the heart in response to ischemic injury and pathology (at protein level). Astrocytes; expressed at high levels in subventricular zone (SVZ)-derived astrocytes and at low levels in cortical astrocytes. In response to peripheral nerve injury, significantly up-regulated in the dorsal spinal cord (at protein level).

It is found in the endoplasmic reticulum. The protein localises to the sarcoplasmic reticulum. Its subcellular location is the secreted. It localises to the extracellular space. The protein resides in the extracellular matrix. In terms of biological role, adhesive glycoprotein that mediates cell-to-cell and cell-to-matrix interactions and is involved in various processes including cellular proliferation, migration, adhesion and attachment, inflammatory response to CNS injury, regulation of vascular inflammation and adaptive responses of the heart to pressure overload and in myocardial function and remodeling. Binds to structural extracellular matrix (ECM) proteins and modulates the ECM in response to tissue damage, contributing to cardioprotective and adaptive ECM remodeling. Plays a role in ER stress response, via its interaction with the activating transcription factor 6 alpha (ATF6) which produces adaptive ER stress response factors and protects myocardium from pressure overload. May contribute to spinal presynaptic hypersensitivity and neuropathic pain states after peripheral nerve injury. May play a role in regulating protective astrogenesis from the subventricular zone (SVZ) niche after injury in a NOTCH1-dependent manner. This Mus musculus (Mouse) protein is Thrombospondin-4 (Thbs4).